Consider the following 127-residue polypeptide: MTIFQGKSGKKPTGGNLKQAKKKRRFELGREPTLTKLGTKVERKVIRTMGGNSKAILFTADTANVYDIHEKKIKKVKIITVKENPANSHYVQRNIINKGTIISTEIGEAIVTSRPGQDGVINAKLLN.

Positions 1-25 are disordered; that stretch reads MTIFQGKSGKKPTGGNLKQAKKKRR.

The protein belongs to the eukaryotic ribosomal protein eS8 family. Part of the 30S ribosomal subunit.

This is Small ribosomal subunit protein eS8 from Thermoplasma volcanium (strain ATCC 51530 / DSM 4299 / JCM 9571 / NBRC 15438 / GSS1).